The following is a 505-amino-acid chain: Maturase K (505 aa).

This sequence belongs to the intron maturase 2 family. MatK subfamily.

The protein localises to the plastid. The protein resides in the chloroplast. Its function is as follows. Usually encoded in the trnK tRNA gene intron. Probably assists in splicing its own and other chloroplast group II introns. The sequence is that of Maturase K from Cubanola domingensis.